Reading from the N-terminus, the 236-residue chain is 2-C-methyl-D-erythritol 4-phosphate cytidylyltransferase (236 aa).

The protein belongs to the IspD/TarI cytidylyltransferase family. IspD subfamily. As to quaternary structure, homodimer.

The enzyme catalyses 2-C-methyl-D-erythritol 4-phosphate + CTP + H(+) = 4-CDP-2-C-methyl-D-erythritol + diphosphate. It functions in the pathway isoprenoid biosynthesis; isopentenyl diphosphate biosynthesis via DXP pathway; isopentenyl diphosphate from 1-deoxy-D-xylulose 5-phosphate: step 2/6. In terms of biological role, catalyzes the formation of 4-diphosphocytidyl-2-C-methyl-D-erythritol from CTP and 2-C-methyl-D-erythritol 4-phosphate (MEP). The polypeptide is 2-C-methyl-D-erythritol 4-phosphate cytidylyltransferase (Salmonella arizonae (strain ATCC BAA-731 / CDC346-86 / RSK2980)).